The sequence spans 239 residues: Large ribosomal subunit protein uL2 (239 aa).

2 disordered regions span residues 1–21 and 203–239; these read MGKS…KSPS and PFGG…GRRK. Residues 222-239 are compositionally biased toward basic residues; the sequence is PPGRKVGHIAARRTGRRK.

Belongs to the universal ribosomal protein uL2 family. Part of the 50S ribosomal subunit. Forms a bridge to the 30S subunit in the 70S ribosome.

One of the primary rRNA binding proteins. Required for association of the 30S and 50S subunits to form the 70S ribosome, for tRNA binding and peptide bond formation. It has been suggested to have peptidyltransferase activity; this is somewhat controversial. Makes several contacts with the 16S rRNA in the 70S ribosome. This is Large ribosomal subunit protein uL2 from Pyrococcus furiosus (strain ATCC 43587 / DSM 3638 / JCM 8422 / Vc1).